The following is a 108-amino-acid chain: Large ribosomal subunit protein uL11 (108 aa).

This sequence belongs to the universal ribosomal protein uL11 family. In terms of assembly, part of the ribosomal stalk of the 50S ribosomal subunit. Interacts with L10 and the large rRNA to form the base of the stalk. L10 forms an elongated spine to which L12 dimers bind in a sequential fashion forming a multimeric L10(L12)X complex.

In terms of biological role, forms part of the ribosomal stalk which helps the ribosome interact with GTP-bound translation factors. The sequence is that of Large ribosomal subunit protein uL11 (rpl11) from Aeropyrum pernix (strain ATCC 700893 / DSM 11879 / JCM 9820 / NBRC 100138 / K1).